The primary structure comprises 293 residues: Epidermal growth factor-like protein 8 (293 aa).

The signal sequence occupies residues 1 to 25 (MGSRAELCTLLGGFSFLLLLIPGEG). The EMI domain maps to 34–112 (SQGVCSKQTL…RHPGALTCEA (79 aa)). Disulfide bonds link cysteine 38–cysteine 97, cysteine 65–cysteine 71, cysteine 96–cysteine 110, cysteine 114–cysteine 124, cysteine 118–cysteine 130, cysteine 132–cysteine 141, cysteine 148–cysteine 159, cysteine 155–cysteine 168, and cysteine 170–cysteine 183. A glycan (N-linked (GlcNAc...) asparagine) is linked at asparagine 50. The 32-residue stretch at 111–142 (EAICAKPCLNGGVCVRPDQCECAPGWGGKHCH) folds into the EGF-like 1 domain. The EGF-like 2; calcium-binding domain occupies 144-184 (DVDECRTSITLCSHHCFNTAGSFTCGCPHDLVLGVDGRTCM). The stretch at 195 to 232 (SILSVAVREAEKDERALKQEIHELRGRLERLEQWAGQA) forms a coiled coil.

The protein resides in the secreted. The sequence is that of Epidermal growth factor-like protein 8 (EGFL8) from Homo sapiens (Human).